Here is a 1033-residue protein sequence, read N- to C-terminus: DNA polymerase I A, chloroplastic (1033 aa).

Over residues 1-11 (MAVAPPLPPAP) the composition is skewed to pro residues. Disordered stretches follow at residues 1-32 (MAVA…LSSP) and 104-142 (TNGT…PSNS). The N-terminal 55 residues, 1 to 55 (MAVAPPLPPAPARQLRRWKGSSPRPPPWLSSPFRRTRYLSRPAFAAGGRQDYSPS), are a transit peptide targeting the chloroplast. Over residues 115-124 (LRHDPSEDIR) the composition is skewed to basic and acidic residues. Over residues 125–142 (SSNYPSLYNQRERGPSNS) the composition is skewed to polar residues. Positions 321-482 (FGNGKTCIWV…LYESLKNKLE (162 aa)) constitute a 3'-5' exonuclease domain. The segment at 696-1030 (CHAIAALCEV…VDAKYAKSWY (335 aa)) is polymerase.

Belongs to the DNA polymerase type-A family. Expressed in shoot apical meristem, root apical meristem, leaf primordia and the marginal meristem.

The protein localises to the plastid. Its subcellular location is the chloroplast. The enzyme catalyses DNA(n) + a 2'-deoxyribonucleoside 5'-triphosphate = DNA(n+1) + diphosphate. Inhibited by dideoxythymidine-triphosphate (ddTTP), but not by aphidicolin and N-ethylmaleimide. Functionally, in addition to polymerase activity, this DNA polymerase exhibits 5'-3' exonuclease activity. May be required for DNA replication and accumulation in plastids. This Oryza sativa subsp. japonica (Rice) protein is DNA polymerase I A, chloroplastic.